We begin with the raw amino-acid sequence, 476 residues long: Growth arrest-specific protein 7 (476 aa).

Residues 1–62 (MSGARCRTLY…PASYVQLLEK (62 aa)) form the SH3 domain. One can recognise a WW domain in the interval 77–110 (VILPPGWQSYLSPQGRRYYVNTTTNETTWERPSS). The interval 100 to 171 (TNETTWERPS…SSPSKKQSKE (72 aa)) is disordered. Residues 108–120 (PSSSPGIPASPGS) are compositionally biased toward low complexity. Phosphoserine is present on residues serine 117 and serine 163. Residues 150–171 (RKSTGDSQNLGSSSPSKKQSKE) are compositionally biased toward polar residues. An F-BAR domain is found at 196–456 (TEWSYCDYFW…LLRKVDPAKD (261 aa)). A coiled-coil region spans residues 309-419 (ENFKKDMKKC…RLEVERVEMI (111 aa)).

It is found in the cytoplasm. In terms of biological role, may play a role in promoting maturation and morphological differentiation of cerebellar neurons. This chain is Growth arrest-specific protein 7 (GAS7), found in Homo sapiens (Human).